We begin with the raw amino-acid sequence, 337 residues long: Transcription factor bHLH121 (337 aa).

The 51-residue stretch at A58–L108 folds into the bHLH domain. The interval V235–K337 is disordered. 2 stretches are compositionally biased toward basic and acidic residues: residues R244 to D263 and S280 to T291. A compositionally biased stretch (low complexity) spans N297–S317.

As to quaternary structure, homodimer. Expressed constitutively in roots, leaves, stems, and flowers.

Its subcellular location is the nucleus. The chain is Transcription factor bHLH121 (BHLH121) from Arabidopsis thaliana (Mouse-ear cress).